The primary structure comprises 78 residues: DNA-directed RNA polymerase subunit omega (78 aa).

The protein belongs to the RNA polymerase subunit omega family. As to quaternary structure, in cyanobacteria the RNAP catalytic core is composed of 2 alpha, 1 beta, 1 beta', 1 gamma and 1 omega subunit. When a sigma factor is associated with the core the holoenzyme is formed, which can initiate transcription.

The enzyme catalyses RNA(n) + a ribonucleoside 5'-triphosphate = RNA(n+1) + diphosphate. Functionally, promotes RNA polymerase assembly. Latches the N- and C-terminal regions of the beta' subunit thereby facilitating its interaction with the beta and alpha subunits. The chain is DNA-directed RNA polymerase subunit omega from Prochlorococcus marinus (strain MIT 9301).